The chain runs to 475 residues: Cytosolic enolase 3 (475 aa).

N-acetylserine is present on Ser2. Positions 200 and 209 each coordinate substrate. The Proton donor role is filled by Asp252. Positions 287, 336, and 361 each coordinate Mg(2+). The substrate site is built by Glu336 and Asp361. The active-site Proton acceptor is Lys386. Substrate contacts are provided by residues Ser413–Cys416 and Lys437.

The protein belongs to the enolase family. Homodimer. Mg(2+) serves as cofactor.

It localises to the cytoplasm. The protein localises to the nucleus. It carries out the reaction (2R)-2-phosphoglycerate = phosphoenolpyruvate + H2O. It functions in the pathway carbohydrate degradation; glycolysis; pyruvate from D-glyceraldehyde 3-phosphate: step 4/5. The polypeptide is Cytosolic enolase 3 (ENO3) (Arabidopsis thaliana (Mouse-ear cress)).